A 294-amino-acid chain; its full sequence is Glucosamine kinase GspK (294 aa).

Thr-12 provides a ligand contact to ATP. Substrate is bound at residue Asp-101. Thr-122 is a binding site for ATP. Residues 139-141 (GRE) and Asp-146 each bind substrate. Gly-202 provides a ligand contact to ATP.

This sequence belongs to the eukaryotic-type N-acetylglucosamine kinase family.

The protein resides in the cytoplasm. It carries out the reaction D-glucosamine + ATP = D-glucosamine 6-phosphate + ADP + H(+). Its function is as follows. ATP-dependent kinase, which is specific for glucosamine. Does not show kinase activity with any other sugar. This Vibrio cholerae serotype O1 (strain ATCC 39315 / El Tor Inaba N16961) protein is Glucosamine kinase GspK (gspK).